Here is an 87-residue protein sequence, read N- to C-terminus: Small ribosomal subunit protein bS20 (87 aa).

Positions 1 to 22 are disordered; that stretch reads MANSAGSKKRARQAVKSRAHNG. The span at 7-19 shows a compositional bias: basic residues; that stretch reads SKKRARQAVKSRA.

Belongs to the bacterial ribosomal protein bS20 family.

Its function is as follows. Binds directly to 16S ribosomal RNA. The chain is Small ribosomal subunit protein bS20 from Marinomonas sp. (strain MWYL1).